Reading from the N-terminus, the 72-residue chain is uncharacterized protein (72 aa).

This is an uncharacterized protein from Homo sapiens (Human).